The primary structure comprises 86 residues: Large ribosomal subunit protein bL27 (86 aa).

Positions 1 to 26 (MATKKAGGSSRNGRDSAGRRLGVKKS) are disordered.

This sequence belongs to the bacterial ribosomal protein bL27 family.

The polypeptide is Large ribosomal subunit protein bL27 (Rickettsia prowazekii (strain Madrid E)).